The primary structure comprises 1182 residues: DNA-directed RNA polymerase subunit beta (1182 aa).

Acidic residues predominate over residues 1150–1162 (DEEVEMKDEDDDN). The tract at residues 1150 to 1182 (DEEVEMKDEDDDNIPNATSALEQVVQPTVTEEE) is disordered. Residues 1171 to 1182 (EQVVQPTVTEEE) are compositionally biased toward low complexity.

Belongs to the RNA polymerase beta chain family. In terms of assembly, the RNAP catalytic core consists of 2 alpha, 1 beta, 1 beta' and 1 omega subunit. When a sigma factor is associated with the core the holoenzyme is formed, which can initiate transcription.

The catalysed reaction is RNA(n) + a ribonucleoside 5'-triphosphate = RNA(n+1) + diphosphate. DNA-dependent RNA polymerase catalyzes the transcription of DNA into RNA using the four ribonucleoside triphosphates as substrates. The protein is DNA-directed RNA polymerase subunit beta of Exiguobacterium sp. (strain ATCC BAA-1283 / AT1b).